The chain runs to 4835 residues: Midasin (4835 aa).

6 AAA-ATPase protomer regions span residues 12–161 (EVLR…PLVL), 324–689 (RSLD…HRFR), 797–1049 (MTTI…AEII), 1096–1375 (KFQD…DYIT), 1489–1738 (APTT…FGYR), and 1821–2110 (ALEA…SIDI). Residues 31 to 38 (GPSASGRT), 356 to 363 (GPTGIGKT), 814 to 821 (GTTSSGKT), 1127 to 1134 (GVSGAGKT), 1513 to 1520 (GDPGVGKS), and 1839 to 1846 (GSPESGKS) contribute to the ATP site. The tract at residues 2197-4058 (SVFIASTLNA…DGTGDQNVSK (1862 aa)) is linker. 2 disordered regions span residues 4033–4056 (DQKE…DQNV) and 4108–4523 (IEEE…LLNP). Composition is skewed to acidic residues over residues 4109–4133 (EEED…QGEA), 4141–4150 (EDDDSAEEYS), 4226–4241 (ADGE…EEEQ), 4282–4291 (VDIDDNEASD), and 4315–4330 (NDEE…DQEN). Polar residues predominate over residues 4331 to 4346 (ITDSNPDANEVGTNDQ). Basic and acidic residues-rich tracts occupy residues 4347-4360 (KQTH…RQEN), 4394-4415 (EFQR…KDEA), and 4429-4438 (VEFDDSKSGR). Polar residues predominate over residues 4468–4477 (HNSSCETSQS). Positions 4478–4488 (SHDRPPAEHLN) are enriched in basic and acidic residues. Positions 4629-4818 (QVLLAVDDSS…RHIEDLPETL (190 aa)) constitute a VWFA domain.

This sequence belongs to the midasin family. In terms of assembly, associates with pre-60S ribosomes in the nucleoplasm.

The protein localises to the nucleus. It is found in the nucleolus. Its subcellular location is the nucleoplasm. In terms of biological role, nuclear chaperone required for maturation and nuclear export of pre-60S ribosome subunits. Functions at successive maturation steps to remove ribosomal factors at critical transition points, first driving the exit of early pre-60S particles from the nucleolus and then driving late pre-60S particles from the nucleus. This is Midasin (MDN1) from Giardia intestinalis (Giardia lamblia).